The sequence spans 268 residues: Lipase (268 aa).

Positions 1–34 (MRLSRRAATASALLLTPALALFGASAAVSAPRIQ) are cleaved as a signal peptide. Ser-44 (nucleophile) is an active-site residue. Intrachain disulfides connect Cys-61–Cys-86, Cys-127–Cys-135, and Cys-185–Cys-232. His-250 is an active-site residue.

Monomer.

It is found in the secreted. The catalysed reaction is a triacylglycerol + H2O = a diacylglycerol + a fatty acid + H(+). The enzyme catalyses hexadecanoyl-CoA + H2O = hexadecanoate + CoA + H(+). With respect to regulation, inhibited by 3,4-dichloroisocoumarin and tetrahydrolipstatin in the absence of substrate, but by phenylmethylsulfonyl fluoride (PMSF) only in the presence of substrate. Several water-miscible solvents enhance the lipase hydrolytic activity in vitro. Tetrahydrofuran and N,N-dimethylformamide (both 50%) inactivate the enzyme with t1/2 of 5 minutes and t1/2 of 2 hours, respectively. Functionally, catalyzes the hydrolysis of p-nitrophenyl esters, alpha- and beta-naphthyl esters, and triacylglycerols, with a preference for medium acyl chain length (C8-C12). Shows a much higher hydrolysis rate of glycerol esters of unsaturated C16 and C18 fatty acids than that of their saturated counterparts, and a preference for cis double bond. Is also able to hydrolyze several natural oils and Tween detergents. Also displays thioesterase and phospholipase activities, towards palmitoyl-coenzyme A and diheptanoyl glycerophosphocholine, respectively. Shows transesterification activity of racemic 1-phenyl ethanol with vinyl acetate in hexane, proceeding with partial (R)-enantioselectivity. The chain is Lipase from Streptomyces rimosus.